Here is a 385-residue protein sequence, read N- to C-terminus: Prepilin peptidase EppA (385 aa).

10 helical membrane-spanning segments follow: residues 1-21, 29-49, 58-78, 80-100, 104-124, 126-146, 166-186, 187-207, 231-251, and 358-378; these read MILM…CFYA, GIIP…LNGA, WIFI…YILW, MVAW…LLPF, LVSY…PFPL, VIIN…FFII, TSMV…LITD, FLPF…TMVI, FELT…IQLI, and PAIF…MILF.

This sequence belongs to the peptidase A24 family.

It localises to the cell membrane. In terms of biological role, peptidase that processes the N-terminus of prepilins. The sequence is that of Prepilin peptidase EppA from Methanothermobacter thermautotrophicus (strain ATCC 29096 / DSM 1053 / JCM 10044 / NBRC 100330 / Delta H) (Methanobacterium thermoautotrophicum).